The sequence spans 154 residues: 6,7-dimethyl-8-ribityllumazine synthase (154 aa).

Residues 22-23 (FN), 56-58 (AFE), and 80-82 (TVI) each bind 5-amino-6-(D-ribitylamino)uracil. A (2S)-2-hydroxy-3-oxobutyl phosphate-binding site is contributed by 85–86 (AT). Histidine 88 serves as the catalytic Proton donor. Phenylalanine 113 provides a ligand contact to 5-amino-6-(D-ribitylamino)uracil. Arginine 127 provides a ligand contact to (2S)-2-hydroxy-3-oxobutyl phosphate.

This sequence belongs to the DMRL synthase family. In terms of assembly, forms an icosahedral capsid composed of 60 subunits, arranged as a dodecamer of pentamers. Can interact with riboflavin synthase, forming a lumazine synthase/riboflavin synthase complex, also designated as 'heavy riboflavin synthase complex', which consists of a trimer of riboflavin synthase enclosed within the icosahedral structure composed of 60 subunits of 6,7-dimethyl-8-ribityllumazine synthase.

The enzyme catalyses (2S)-2-hydroxy-3-oxobutyl phosphate + 5-amino-6-(D-ribitylamino)uracil = 6,7-dimethyl-8-(1-D-ribityl)lumazine + phosphate + 2 H2O + H(+). It participates in cofactor biosynthesis; riboflavin biosynthesis; riboflavin from 2-hydroxy-3-oxobutyl phosphate and 5-amino-6-(D-ribitylamino)uracil: step 1/2. In terms of biological role, catalyzes the formation of 6,7-dimethyl-8-ribityllumazine by condensation of 5-amino-6-(D-ribitylamino)uracil with 3,4-dihydroxy-2-butanone 4-phosphate. This is the penultimate step in the biosynthesis of riboflavin. Is able to use the non-natural R enantiomer of 3,4-dihydroxy-2-butanone 4-phosphate as a substrate, but with less efficiency than the natural S enantiomer. Cannot use unphosphorylated 3,4-dihydroxy-2-butanone, 3,4-dihydroxy-2-butanone 3-phosphate or diacetyl as substrates. The sequence is that of 6,7-dimethyl-8-ribityllumazine synthase (ribH) from Bacillus subtilis (strain 168).